The sequence spans 555 residues: Inorganic phosphate transporter 1-11 (555 aa).

The Cytoplasmic segment spans residues 1–28 (MADADGGSNLAVLDALDSARTQMYHMKA). The chain crosses the membrane as a helical span at residues 29–49 (IVIAGMGFFTDAYDLFCISTV). Topologically, residues 50–77 (SKLLGRLYYQPDGSTDSKPGALSKTANN) are extracellular. Residues 78 to 98 (MVIGVALVGTLMGQLVFGYFG) traverse the membrane as a helical segment. Residues 99–105 (DKLGRKR) lie on the Cytoplasmic side of the membrane. Residues 106-126 (VYGVTLILMAACAIGSGLSFG) traverse the membrane as a helical segment. At 127–130 (SSRK) the chain is on the extracellular side. The chain crosses the membrane as a helical span at residues 131–151 (AVIGTLCFFRFWLGFGIGGDY). The Cytoplasmic segment spans residues 152 to 167 (PLSATIMSEYSNKKTR). A helical transmembrane segment spans residues 168–188 (GAFIAAVFAMQGVGIIFAGLV). Residues 189 to 216 (SMIVSSIFLTYNKAPSYKGNHDLSRQMP) are Extracellular-facing. Residues 217-237 (AADYVWRIVLMIGAFPALATF) form a helical membrane-spanning segment. Residues 238–298 (YWRMKMPETA…PLLSMEFARR (61 aa)) are Cytoplasmic-facing. The helical transmembrane segment at 299-319 (HGLHLIGTTTTWFLLDIAFYS) threads the bilayer. Over 320-351 (QNLTQKDIFPAMGLISGAAEVNALTEMFQISK) the chain is Extracellular. A helical membrane pass occupies residues 352–372 (ASFLVALLGTFPGYWVTVALI). Over 373-377 (DKMGR) the chain is Cytoplasmic. The helical transmembrane segment at 378–398 (YMIQLIGFFMMSMFMLAMGIL) threads the bilayer. The Extracellular segment spans residues 399–408 (YDYLKTHHFL). Residues 409–436 (FGLLYALTFFFANFGPNSTTFVLPAELF) form a helical membrane-spanning segment. At 437–442 (PTRVRS) the chain is on the cytoplasmic side. The helical transmembrane segment at 443–463 (TCHAISAAAGKAGAIVAAFGI) threads the bilayer. Residues 464 to 477 (QKLTYNSQVKSIKK) are Extracellular-facing. The helical transmembrane segment at 478–498 (ALIILSITNMLGFFFTFLVPE) threads the bilayer. Topologically, residues 499-555 (TMGRSLEEISGEDGNTGAGGGGAPAAANAGVGVSASDVSRDEKFPASSTEWQTSMHA) are cytoplasmic. The disordered stretch occupies residues 506–555 (EISGEDGNTGAGGGGAPAAANAGVGVSASDVSRDEKFPASSTEWQTSMHA). A compositionally biased stretch (gly residues) spans 512–521 (GNTGAGGGGA). The span at 522-535 (PAAANAGVGVSASD) shows a compositional bias: low complexity. Residues 544–555 (ASSTEWQTSMHA) show a composition bias toward polar residues.

It belongs to the major facilitator superfamily. Phosphate:H(+) symporter (TC 2.A.1.9) family.

The protein resides in the membrane. Its function is as follows. Symbiosis-specific regulated inorganic phosphate (Pi) transporter. Probably involved in symbiosis-mediated Pi uptake in roots colonized by myccorhizal fungi. The sequence is that of Inorganic phosphate transporter 1-11 (PHT1-11) from Oryza sativa subsp. japonica (Rice).